A 196-amino-acid chain; its full sequence is Pycsar effector protein GmPycTM (196 aa).

3 helical membrane-spanning segments follow: residues 34 to 54, 82 to 102, and 176 to 196; these read ISFSLAFAGILLGGFFSSGII, ITTIVLVVFIILMIVSLTYLF, and VNWLIASTIVFIILNGMFLFL.

Its subcellular location is the cell inner membrane. Pycsar (pyrimidine cyclase system for antiphage resistance) provides immunity against bacteriophage. The pyrimidine cyclase (PycC) synthesizes cyclic nucleotides in response to infection; these serve as specific second messenger signals. The signals activate the adjacent effector, leading to bacterial cell death and abortive phage infection. A clade C Pycsar system. Its function is as follows. The effector gene of a two-gene Pycsar system. Expression of this and adjacent uridylate cyclase GmPycC (AC P0DV42) probably confers resistance to bacteriophage. The genes are probably only expressed in response to bacteriophage infection. Probably only responds to cUMP (produced by its cognate NTP cyclase), acts by impairing membrane integrity. This Gulbenkiania mobilis protein is Pycsar effector protein GmPycTM.